The following is a 263-amino-acid chain: Hydroxyethylthiazole kinase (263 aa).

M39 contacts substrate. 2 residues coordinate ATP: K115 and T160. G187 is a binding site for substrate.

Belongs to the Thz kinase family. The cofactor is Mg(2+).

It catalyses the reaction 5-(2-hydroxyethyl)-4-methylthiazole + ATP = 4-methyl-5-(2-phosphooxyethyl)-thiazole + ADP + H(+). It functions in the pathway cofactor biosynthesis; thiamine diphosphate biosynthesis; 4-methyl-5-(2-phosphoethyl)-thiazole from 5-(2-hydroxyethyl)-4-methylthiazole: step 1/1. In terms of biological role, catalyzes the phosphorylation of the hydroxyl group of 4-methyl-5-beta-hydroxyethylthiazole (THZ). This Staphylococcus aureus (strain COL) protein is Hydroxyethylthiazole kinase.